The chain runs to 335 residues: Nucleoid-associated protein SeAg_B2375 (335 aa).

This sequence belongs to the YejK family.

It localises to the cytoplasm. The protein resides in the nucleoid. The protein is Nucleoid-associated protein SeAg_B2375 of Salmonella agona (strain SL483).